Reading from the N-terminus, the 349-residue chain is Microbial Terpene synthase-like protein 1 (349 aa).

4 residues coordinate Mg(2+): D98, D102, N243, and S247. A DDXXD motif motif is present at residues 98–102 (DDILD).

The protein belongs to the terpene synthase family. The cofactor is Mg(2+).

It functions in the pathway secondary metabolite biosynthesis; terpenoid biosynthesis. Its function is as follows. Sesquiterpene synthase converting farnesyl diphosphate to six sesquiterpenes, with beta-elemene, delta-cadinene and an unidentified oxygenated sesquiterpene as the major products. Has no diterpene synthase activity. The polypeptide is Microbial Terpene synthase-like protein 1 (Selaginella moellendorffii (Spikemoss)).